A 351-amino-acid polypeptide reads, in one-letter code: Photosystem II D2 protein (351 aa).

The helical transmembrane segment at 39–59 (CSYLALGAWFTGTTFVTSWYT) threads the bilayer. A chlorophyll a-binding site is contributed by H116. Residues 123–139 (GFCLRQFEIARLVGIRP) form a helical membrane-spanning segment. 2 residues coordinate pheophytin a: Q128 and N141. Residues 151–164 (VFVSVFLIYPLGQA) traverse the membrane as a helical segment. Residue H196 participates in chlorophyll a binding. Residues 206–226 (GALLCAIHGATVENTLFEDGE) traverse the membrane as a helical segment. H213 and F260 together coordinate a plastoquinone. H213 provides a ligand contact to Fe cation. H267 serves as a coordination point for Fe cation. The chain crosses the membrane as a helical span at residues 277–293 (GLWTSSIGIIGLALNLR).

This sequence belongs to the reaction center PufL/M/PsbA/D family. In terms of assembly, PSII is composed of 1 copy each of membrane proteins PsbA, PsbB, PsbC, PsbD, PsbE, PsbF, PsbH, PsbI, PsbJ, PsbK, PsbL, PsbM, PsbT, PsbY, PsbZ, Psb30/Ycf12, at least 3 peripheral proteins of the oxygen-evolving complex and a large number of cofactors. It forms dimeric complexes. The D1/D2 heterodimer binds P680, chlorophylls that are the primary electron donor of PSII, and subsequent electron acceptors. It shares a non-heme iron and each subunit binds pheophytin, quinone, additional chlorophylls, carotenoids and lipids. There is also a Cl(-1) ion associated with D1 and D2, which is required for oxygen evolution. The PSII complex binds additional chlorophylls, carotenoids and specific lipids. serves as cofactor.

It localises to the plastid. Its subcellular location is the chloroplast thylakoid membrane. The catalysed reaction is 2 a plastoquinone + 4 hnu + 2 H2O = 2 a plastoquinol + O2. Photosystem II (PSII) is a light-driven water:plastoquinone oxidoreductase that uses light energy to abstract electrons from H(2)O, generating O(2) and a proton gradient subsequently used for ATP formation. It consists of a core antenna complex that captures photons, and an electron transfer chain that converts photonic excitation into a charge separation. The D1/D2 (PsbA/PsbD) reaction center heterodimer binds P680, the primary electron donor of PSII as well as several subsequent electron acceptors. D2 is needed for assembly of a stable PSII complex. The protein is Photosystem II D2 protein of Galdieria sulphuraria (Red alga).